The following is a 94-amino-acid chain: Large ribosomal subunit protein uL23 (94 aa).

This sequence belongs to the universal ribosomal protein uL23 family. As to quaternary structure, part of the 50S ribosomal subunit. Contacts protein L29, and trigger factor when it is bound to the ribosome.

Its function is as follows. One of the early assembly proteins it binds 23S rRNA. One of the proteins that surrounds the polypeptide exit tunnel on the outside of the ribosome. Forms the main docking site for trigger factor binding to the ribosome. This chain is Large ribosomal subunit protein uL23, found in Geobacter sulfurreducens (strain ATCC 51573 / DSM 12127 / PCA).